The sequence spans 251 residues: Protein CMS1 (251 aa).

The tract at residues 1–37 is disordered; it reads MSLDNDINTKKRKLQDDEKPRKKRKHKRPTRDDDADL.

Belongs to the CMS1 family.

It localises to the nucleus. Functionally, may play a role in the regulation of DNA replication and cell cycle control. The chain is Protein CMS1 (CSM1) from Chaetomium thermophilum (strain DSM 1495 / CBS 144.50 / IMI 039719) (Thermochaetoides thermophila).